The sequence spans 556 residues: Formate--tetrahydrofolate ligase (556 aa).

65–72 (TPAGEGKS) provides a ligand contact to ATP.

The protein belongs to the formate--tetrahydrofolate ligase family.

The enzyme catalyses (6S)-5,6,7,8-tetrahydrofolate + formate + ATP = (6R)-10-formyltetrahydrofolate + ADP + phosphate. The protein operates within one-carbon metabolism; tetrahydrofolate interconversion. This chain is Formate--tetrahydrofolate ligase, found in Natranaerobius thermophilus (strain ATCC BAA-1301 / DSM 18059 / JW/NM-WN-LF).